A 361-amino-acid chain; its full sequence is Chorismate synthase (361 aa).

Residues Arg48 and Arg54 each contribute to the NADP(+) site. FMN is bound by residues 125 to 127, 238 to 239, Gly278, 293 to 297, and Arg319; these read RSS, NA, and KPTSS.

It belongs to the chorismate synthase family. Homotetramer. It depends on FMNH2 as a cofactor.

The catalysed reaction is 5-O-(1-carboxyvinyl)-3-phosphoshikimate = chorismate + phosphate. The protein operates within metabolic intermediate biosynthesis; chorismate biosynthesis; chorismate from D-erythrose 4-phosphate and phosphoenolpyruvate: step 7/7. Its function is as follows. Catalyzes the anti-1,4-elimination of the C-3 phosphate and the C-6 proR hydrogen from 5-enolpyruvylshikimate-3-phosphate (EPSP) to yield chorismate, which is the branch point compound that serves as the starting substrate for the three terminal pathways of aromatic amino acid biosynthesis. This reaction introduces a second double bond into the aromatic ring system. This chain is Chorismate synthase, found in Methylobacillus flagellatus (strain ATCC 51484 / DSM 6875 / VKM B-1610 / KT).